The following is a 394-amino-acid chain: Gastricsin (394 aa).

Residues 1-16 (MKWMVVVLLCLPLLEA) form the signal peptide. Positions 17-65 (TQIKVPLKKIKSIREVLREKGLLGDFLKNHKPQHARKFFRNRLAKTGDF) are cleaved as a propeptide — activation peptide. The 313-residue stretch at 79-391 (YFGQISLGTP…DLANNRVGFA (313 aa)) folds into the Peptidase A1 domain. Asp-97 is a catalytic residue. Disulfide bonds link Cys-110-Cys-115 and Cys-273-Cys-277. Thr-283 is an active-site residue. A disulfide bridge connects residues Cys-316 and Cys-349.

This sequence belongs to the peptidase A1 family.

The protein localises to the secreted. It catalyses the reaction More restricted specificity than pepsin A, but shows preferential cleavage at Tyr-|-Xaa bonds. High activity on hemoglobin.. In terms of biological role, hydrolyzes a variety of proteins. This Cavia porcellus (Guinea pig) protein is Gastricsin (PGC).